A 137-amino-acid chain; its full sequence is Phosphoribosyl-AMP cyclohydrolase (137 aa).

A Mg(2+)-binding site is contributed by aspartate 84. Cysteine 85 contributes to the Zn(2+) binding site. The Mg(2+) site is built by aspartate 86 and aspartate 88. Positions 101 and 108 each coordinate Zn(2+).

This sequence belongs to the PRA-CH family. In terms of assembly, homodimer. Mg(2+) is required as a cofactor. Requires Zn(2+) as cofactor.

The protein resides in the cytoplasm. The catalysed reaction is 1-(5-phospho-beta-D-ribosyl)-5'-AMP + H2O = 1-(5-phospho-beta-D-ribosyl)-5-[(5-phospho-beta-D-ribosylamino)methylideneamino]imidazole-4-carboxamide. Its pathway is amino-acid biosynthesis; L-histidine biosynthesis; L-histidine from 5-phospho-alpha-D-ribose 1-diphosphate: step 3/9. In terms of biological role, catalyzes the hydrolysis of the adenine ring of phosphoribosyl-AMP. The protein is Phosphoribosyl-AMP cyclohydrolase of Chlorobium phaeovibrioides (strain DSM 265 / 1930) (Prosthecochloris vibrioformis (strain DSM 265)).